The chain runs to 287 residues: 4-hydroxybenzoate octaprenyltransferase (287 aa).

Helical transmembrane passes span Trp41 to Met61, Trp89 to Leu109, Phe133 to Phe153, Asp158 to Tyr178, Phe202 to Ile224, and Asn267 to Ser287.

Belongs to the UbiA prenyltransferase family. The cofactor is Mg(2+).

The protein resides in the cell inner membrane. It catalyses the reaction all-trans-octaprenyl diphosphate + 4-hydroxybenzoate = 4-hydroxy-3-(all-trans-octaprenyl)benzoate + diphosphate. It participates in cofactor biosynthesis; ubiquinone biosynthesis. In terms of biological role, catalyzes the prenylation of para-hydroxybenzoate (PHB) with an all-trans polyprenyl group. Mediates the second step in the final reaction sequence of ubiquinone-8 (UQ-8) biosynthesis, which is the condensation of the polyisoprenoid side chain with PHB, generating the first membrane-bound Q intermediate 3-octaprenyl-4-hydroxybenzoate. This is 4-hydroxybenzoate octaprenyltransferase from Burkholderia lata (strain ATCC 17760 / DSM 23089 / LMG 22485 / NCIMB 9086 / R18194 / 383).